The following is a 155-amino-acid chain: MRKSAAPKRPVVQDPVYKSELVTQLVNKILIGGKKSTAERIVYGALEICREKTGTDPVGTLEKALGNVRPDLEVRSRRVGGATYQVPVDVRPERANTLALRWLVTFTRQRRENTMIERLANELLDAANGLGASVKRREDTHKMAEANRAFAHYRW.

This sequence belongs to the universal ribosomal protein uS7 family. As to quaternary structure, part of the 30S ribosomal subunit. Contacts proteins S9 and S11.

One of the primary rRNA binding proteins, it binds directly to 16S rRNA where it nucleates assembly of the head domain of the 30S subunit. Is located at the subunit interface close to the decoding center, probably blocks exit of the E-site tRNA. The protein is Small ribosomal subunit protein uS7 of Corynebacterium glutamicum (strain R).